The primary structure comprises 792 residues: Phenylalanine--tRNA ligase beta subunit (792 aa).

In terms of domain architecture, tRNA-binding spans 39–147 (GEALDLILVA…EDAPIGTPLA (109 aa)). Positions 400 to 475 (PAPASILLRR…RIRGYEHLPT (76 aa)) constitute a B5 domain. Mg(2+)-binding residues include Asp-453, Asp-459, Glu-462, and Glu-463. Positions 698-791 (SRFPFVRRDL…IQQRHDVRIR (94 aa)) constitute an FDX-ACB domain.

The protein belongs to the phenylalanyl-tRNA synthetase beta subunit family. Type 1 subfamily. As to quaternary structure, tetramer of two alpha and two beta subunits. Requires Mg(2+) as cofactor.

The protein localises to the cytoplasm. The catalysed reaction is tRNA(Phe) + L-phenylalanine + ATP = L-phenylalanyl-tRNA(Phe) + AMP + diphosphate + H(+). The chain is Phenylalanine--tRNA ligase beta subunit from Xylella fastidiosa (strain Temecula1 / ATCC 700964).